The primary structure comprises 359 residues: 4-galactosyl-N-acetylglucosaminide 3-alpha-L-fucosyltransferase 9 (359 aa).

The Cytoplasmic segment spans residues 1–11 (MTSASKGILRP). Residues 12–32 (FLIVCIILACSMVCLFIYIKP) traverse the membrane as a helical; Signal-anchor for type II membrane protein segment. At 33 to 359 (TNSWIFSPME…VGNLEKWFWN (327 aa)) the chain is on the lumenal side. A glycan (N-linked (GlcNAc...) asparagine) is linked at N62. Residues 63–168 (ETTILIWVWP…RRDSDIQVPY (106 aa)) form an acceptor-binding region. Q75 lines the a beta-D-galactosyl-(1-&gt;4)-N-acetyl-beta-D-glucosaminyl derivative pocket. Cystine bridges form between C82/C335, C91/C338, and C190/C238. An N-linked (GlcNAc...) asparagine glycan is attached at N101. E137 contacts a beta-D-galactosyl-(1-&gt;4)-N-acetyl-beta-D-glucosaminyl derivative. E137 functions as the Nucleophile in the catalytic mechanism. E137 provides a ligand contact to GDP-beta-L-fucose. N-linked (GlcNAc...) asparagine glycosylation is present at N153. Positions 168, 192, 194, 195, 202, 226, 241, 246, 252, 255, and 256 each coordinate GDP-beta-L-fucose. Residues 169–326 (GFLTVSTNPF…NWRKDFTVNL (158 aa)) are donor-binding. Positions 327–359 (PRFWESHACLACDHVKRHQEYKSVGNLEKWFWN) are acceptor-binding.

It belongs to the glycosyltransferase 10 family. As to quaternary structure, homodimer. In terms of processing, N-glycosylated with complex-type N-glycans.

It localises to the golgi apparatus. It is found in the trans-Golgi network membrane. The protein resides in the golgi apparatus membrane. It catalyses the reaction a beta-D-galactosyl-(1-&gt;4)-N-acetyl-beta-D-glucosaminyl derivative + GDP-beta-L-fucose = a beta-D-galactosyl-(1-&gt;4)-[alpha-L-fucosyl-(1-&gt;3)]-N-acetyl-beta-D-glucosaminyl derivative + GDP + H(+). The catalysed reaction is an alpha-Neu5Ac-(2-&gt;3)-beta-D-Gal-(1-&gt;4)-beta-D-GlcNAc-(1-&gt;3)-beta-D-Gal-(1-&gt;4)-beta-D-GlcNAc derivative + GDP-beta-L-fucose = an alpha-Neu5Ac-(2-&gt;3)-beta-D-Gal-(1-&gt;4)-beta-D-GlcNAc-(1-&gt;3)-beta-D-Gal-(1-&gt;4)-[alpha-L-Fuc-(1-&gt;3)]-beta-D-GlcNAc derivative + GDP + H(+). It carries out the reaction alpha-N-glycoloylneuraminosyl-(2-&gt;3)-beta-D-galactosyl-(1-&gt;4)-N-acetyl-beta-D-glucosaminyl-(1-&gt;3)-beta-D-galactosyl-(1-&gt;4)-N-acetyl-beta-D-glucosaminyl-(1-&gt;3)-beta-D-galactosyl-(1-&gt;4)-beta-D-glucosyl-(1&lt;-&gt;1')-ceramide + GDP-beta-L-fucose = alpha-N-glycoloylneuraminosyl-(2-&gt;3)-beta-D-galactosyl-(1-&gt;4)-N-acetyl-beta-D-glucosaminyl-(1-&gt;3)-beta-D-galactosyl-(1-&gt;4)-[alpha-L-fucosyl-(1-&gt;3)]-N-acetyl-beta-D-glucosaminyl-(1-&gt;3)-beta-D-galactosyl-(1-&gt;4)-beta-D-glucosyl-(1&lt;-&gt;1')-ceramide + GDP + H(+). The enzyme catalyses alpha-D-galactosyl-(1-&gt;3)-beta-D-galactosyl-(1-&gt;4)-N-acetyl-beta-D-glucosaminyl-(1-&gt;3)-beta-D-galactosyl-(1-&gt;4)-beta-D-glucosyl-(1&lt;-&gt;1')-ceramide + GDP-beta-L-fucose = a neolactoside IV(3)-alpha-Gal,III(3)-alpha-Fuc-nLc4Cer + GDP + H(+). It catalyses the reaction a neolactoside nLc4Cer + GDP-beta-L-fucose = a neolactoside III(3)-alpha-Fuc-nLc4Cer + GDP + H(+). The catalysed reaction is an N-acetyl-alpha-neuraminyl-(2-&gt;3)-beta-D-galactosyl-(1-&gt;4)-N-acetyl-beta-D-glucosaminyl derivative + GDP-beta-L-fucose = an alpha-Neu5Ac-(2-&gt;3)-beta-D-Gal-(1-&gt;4)-[alpha-L-Fuc-(1-&gt;3)]-beta-D-GlcNAc derivative + GDP + H(+). It carries out the reaction beta-D-Gal-(1-&gt;4)-beta-D-GlcNAc-(1-&gt;3)-beta-D-Gal-(1-&gt;4)-D-Glc + GDP-beta-L-fucose = beta-D-Gal-(1-&gt;4)-[alpha-L-Fuc-(1-&gt;3)]-beta-D-GlcNAc-(1-&gt;3)-beta-D-Gal-(1-&gt;4)-D-Glc + GDP + H(+). The enzyme catalyses an alpha-L-Fuc-(1-&gt;2)-beta-D-Gal-(1-&gt;4)-beta-D-GlcNAc derivative + GDP-beta-L-fucose = an alpha-L-Fuc-(1-&gt;2)-beta-D-Gal-(1-&gt;4)-[alpha-L-Fuc-(1-&gt;3)]-beta-D-GlcNAc derivative + GDP + H(+). The protein operates within protein modification; protein glycosylation. It participates in glycolipid biosynthesis. Its activity is regulated as follows. Activated by Mn2+. In terms of biological role, catalyzes alpha(1-&gt;3) linkage of fucosyl moiety transferred from GDP-beta-L-fucose to N-acetyl glucosamine (GlcNAc) within type 2 lactosamine (LacNAc, beta-D-Gal-(1-&gt;4)-beta-D-GlcNAc-) glycan attached to glycolipids and N- or O-linked glycoproteins. Fucosylates distal type 2 LacNAc and its fucosylated (H-type 2 LacNAc) and sialylated (sialyl-type 2 LacNAc) derivatives to form Lewis x (Lex) (CD15) and Lewis y (Ley) antigenic epitopes involved in cell adhesion and differentiation. Generates Lex epitopes in the brain, presumably playing a role in the maintenance of neuronal stemness and neurite outgrowth in progenitor neural cells. Fucosylates the internal type 2 LacNAc unit of the polylactosamine chain to form VIM-2 antigen that serves as recognition epitope for SELE. Can also modify milk oligosaccharides in particular type 2 tetrasaccharide LNnT. This is 4-galactosyl-N-acetylglucosaminide 3-alpha-L-fucosyltransferase 9 from Bos taurus (Bovine).